Here is a 288-residue protein sequence, read N- to C-terminus: Bis(5'-nucleosyl)-tetraphosphatase, symmetrical (288 aa).

The protein belongs to the Ap4A hydrolase family.

It catalyses the reaction P(1),P(4)-bis(5'-adenosyl) tetraphosphate + H2O = 2 ADP + 2 H(+). In terms of biological role, hydrolyzes diadenosine 5',5'''-P1,P4-tetraphosphate to yield ADP. In Baumannia cicadellinicola subsp. Homalodisca coagulata, this protein is Bis(5'-nucleosyl)-tetraphosphatase, symmetrical.